A 407-amino-acid polypeptide reads, in one-letter code: Protein trichome birefringence-like 12 (407 aa).

The helical; Signal-anchor for type II membrane protein transmembrane segment at 21 to 41 (SLLPRILLLSLLLLLFYSLIL) threads the bilayer. Residues 130-132 (GDS) carry the GDS motif motif. Residues 379-393 (DCMHWCLPGVPDTWV) carry the DCXHWCLPGXXDXWN motif motif.

Belongs to the PC-esterase family. TBL subfamily.

The protein resides in the membrane. In terms of biological role, may act as a bridging protein that binds pectin and other cell wall polysaccharides. Probably involved in maintaining esterification of pectins. May be involved in the specific O-acetylation of cell wall polymers. The polypeptide is Protein trichome birefringence-like 12 (TBL12) (Arabidopsis thaliana (Mouse-ear cress)).